Consider the following 295-residue polypeptide: Nucleotide-binding protein BPUM_3115 (295 aa).

Residue 16–23 participates in ATP binding; it reads GMSGAGKT. GTP is bound at residue 67-70; it reads DLRG.

This sequence belongs to the RapZ-like family.

Displays ATPase and GTPase activities. This is Nucleotide-binding protein BPUM_3115 from Bacillus pumilus (strain SAFR-032).